The sequence spans 357 residues: Histidine biosynthesis bifunctional protein HisB (357 aa).

Positions 1–168 (MTPILFIDRD…GIAHALADAP (168 aa)) are histidinol-phosphatase. Asp-8 serves as the catalytic Nucleophile. 3 residues coordinate Mg(2+): Asp-8, Asp-10, and Asp-128. The active-site Proton donor is Asp-10. Residues 169-357 (RIAVVQRDTK…TALPTTKGAL (189 aa)) form an imidazoleglycerol-phosphate dehydratase region.

It in the N-terminal section; belongs to the histidinol-phosphatase family. The protein in the C-terminal section; belongs to the imidazoleglycerol-phosphate dehydratase family. Mg(2+) is required as a cofactor.

The protein localises to the cytoplasm. It carries out the reaction D-erythro-1-(imidazol-4-yl)glycerol 3-phosphate = 3-(imidazol-4-yl)-2-oxopropyl phosphate + H2O. The enzyme catalyses L-histidinol phosphate + H2O = L-histidinol + phosphate. It functions in the pathway amino-acid biosynthesis; L-histidine biosynthesis; L-histidine from 5-phospho-alpha-D-ribose 1-diphosphate: step 6/9. Its pathway is amino-acid biosynthesis; L-histidine biosynthesis; L-histidine from 5-phospho-alpha-D-ribose 1-diphosphate: step 8/9. This chain is Histidine biosynthesis bifunctional protein HisB, found in Stenotrophomonas maltophilia (strain R551-3).